A 225-amino-acid polypeptide reads, in one-letter code: NAD(P)H-hydrate epimerase (225 aa).

Residues Met-9–Phe-209 form the YjeF N-terminal domain. Position 57–61 (Asn-57–Asp-61) interacts with (6S)-NADPHX. Positions 58 and 119 each coordinate K(+). Residues Gly-123 to Leu-129 and Asp-152 contribute to the (6S)-NADPHX site. Thr-155 is a K(+) binding site.

This sequence belongs to the NnrE/AIBP family. Requires K(+) as cofactor.

The catalysed reaction is (6R)-NADHX = (6S)-NADHX. It catalyses the reaction (6R)-NADPHX = (6S)-NADPHX. Its function is as follows. Catalyzes the epimerization of the S- and R-forms of NAD(P)HX, a damaged form of NAD(P)H that is a result of enzymatic or heat-dependent hydration. This is a prerequisite for the S-specific NAD(P)H-hydrate dehydratase to allow the repair of both epimers of NAD(P)HX. The chain is NAD(P)H-hydrate epimerase from Leuconostoc sp. (strain C2).